We begin with the raw amino-acid sequence, 325 residues long: MNTSCEPILKPTLNKYVVFPIVYEDIWKMYKKAVASFWTVEEVDLSKDFSDWLKLSDNEKNFIKHILAFFAASDGIVNENLAERFYSEVQISEARCFYGFQIAMENIHSEMYSLLIDTYILDSKEKNYLFNAIENMNCVKQKANWAKKWIESKNRTYGERLVAFAAVEGIFFSGSFAAIFWIKKRGLMPGLTFSNELISRDEGLHCDFACIMFKHLLNPPLNSVVRDIIIEAVNIEKNFLTEAIPVKLIGMNCDLMKQYIEFVADRLLLELGCDKYYCSKNPFDFMENISLEGKTNFFEKRVSEYQKMSVMSNKKDNVFSLDIDF.

Residues Asp74, Glu105, and His108 each coordinate Fe cation. Residue Tyr112 is part of the active site. Positions 168, 202, and 205 each coordinate Fe cation.

This sequence belongs to the ribonucleoside diphosphate reductase small chain family. In terms of assembly, heterodimer of a large and a small chain. Fe cation is required as a cofactor.

It catalyses the reaction a 2'-deoxyribonucleoside 5'-diphosphate + [thioredoxin]-disulfide + H2O = a ribonucleoside 5'-diphosphate + [thioredoxin]-dithiol. In terms of biological role, ribonucleoside-diphosphate reductase holoenzyme provides the precursors necessary for viral DNA synthesis. Allows virus growth in non-dividing cells. Catalyzes the biosynthesis of deoxyribonucleotides from the corresponding ribonucleotides. The chain is Ribonucleoside-diphosphate reductase small chain from Yaba-like disease virus (YLDV).